The primary structure comprises 4841 residues: Nonribosomal peptide synthetase 2 (4841 aa).

The segment at 26-429 (VKPPNQNVAL…GRLSDGQVKL (404 aa)) is adenylation 1. The region spanning 531 to 604 (EPVDEFESSL…DIIFAARRQI (74 aa)) is the Carrier 1 domain. O-(pantetheine 4'-phosphoryl)serine is present on serine 565. The condensation 1 stretch occupies residues 640-1042 (EEIIPCTPLQ…ILERPTQEIK (403 aa)). Residues 1072–1463 (FEDVVRKHPE…GRIDDQVKLR (392 aa)) form an adenylation 2 region. One can recognise a Carrier 2 domain in the interval 1587–1665 (EGDWSRMDLV…QLAKHLEGKP (79 aa)). The residue at position 1625 (serine 1625) is an O-(pantetheine 4'-phosphoryl)serine. The interval 1702–2043 (ILPCTPLQEA…QTVWELEADS (342 aa)) is condensation 2. In terms of domain architecture, Carrier 3 spans 2139 to 2212 (SEVELDVRQV…KIAAKLLENR (74 aa)). Serine 2173 is subject to O-(pantetheine 4'-phosphoryl)serine. Positions 2248–2663 (AVLPCTPLQS…NHLATEDEAF (416 aa)) are condensation 3. The tract at residues 2695–3090 (AAVHPNKLAL…GRADDQVKLR (396 aa)) is adenylation 3. One can recognise a Carrier 4 domain in the interval 3219 to 3293 (QDILVLLYDA…DLANCLAKAA (75 aa)). An O-(pantetheine 4'-phosphoryl)serine modification is found at serine 3253. The interval 3333 to 3735 (IAPCSPLQEG…DLAAESPQSE (403 aa)) is condensation 4. In terms of domain architecture, Carrier 5 spans 3759–3838 (QNSFEWTSEA…KMITELASIT (80 aa)). Serine 3799 bears the O-(pantetheine 4'-phosphoryl)serine mark. The segment at 3873-4242 (SVLPPTHLQE…VEAEAVSDSL (370 aa)) is condensation 5. A Carrier 6 domain is found at 4318–4394 (IEWNQNEIGI…EMAQKADTKL (77 aa)). Serine 4355 is modified (O-(pantetheine 4'-phosphoryl)serine). The interval 4430-4726 (EVLPALPMQV…DIHLITSESR (297 aa)) is condensation 6.

This sequence belongs to the NRP synthetase family.

Its pathway is siderophore biosynthesis. Functionally, nonribosomal peptide synthetase; part of the gene cluster that mediates the biosynthesis of hydroxamate-containing siderophores that play a critical role in virulence. Gibberella zeae produces extracellular coprogen-type siderophores as well as the intracellular siderophore ferricrocin. The role of extracellular siderophores is to supply iron to the fungus during plant infection, and the intracellular ferricrocin is required for intracellular iron distribution and storage with a crucial role in ascus and ascospore development. SID1 catalyzes the conversion of L-ornithine to N(5)-hydroxyornithine, the first step in the biosynthesis of all hydroxamate-containing siderophores. The assembly of extracellular coprogen-type siderophores is performed by the nonribosomal peptide synthetase (NRPS) NPS6 whereas the intracellular siderophore ferricrocin is assembled by NPS2. The polypeptide is Nonribosomal peptide synthetase 2 (Gibberella zeae (strain ATCC MYA-4620 / CBS 123657 / FGSC 9075 / NRRL 31084 / PH-1) (Wheat head blight fungus)).